A 114-amino-acid polypeptide reads, in one-letter code: Iron-sulfur cluster insertion protein ErpA (114 aa).

Cysteine 42, cysteine 106, and cysteine 108 together coordinate iron-sulfur cluster.

It belongs to the HesB/IscA family. In terms of assembly, homodimer. Iron-sulfur cluster serves as cofactor.

Required for insertion of 4Fe-4S clusters for at least IspG. This chain is Iron-sulfur cluster insertion protein ErpA, found in Yersinia pseudotuberculosis serotype O:1b (strain IP 31758).